A 198-amino-acid chain; its full sequence is Guanylate kinase (198 aa).

The Guanylate kinase-like domain maps to 4–186 (PRPVVLSGPS…AYATLKQALS (183 aa)). 14–19 (GAGKST) contributes to the ATP binding site. 37 to 51 (SHTTRNPRPGEEDGK) contributes to the substrate binding site. Active-site residues include R44, R137, and R148. 171–172 (ND) provides a ligand contact to ATP.

Belongs to the guanylate kinase family. Monomer. Interacts with RD3. In terms of tissue distribution, widely expressed. In retina is expressed in inner segment, outer nuclear layer, outer plexiform layer, inner plexiform layer, and ganglion cell layer (at protein level).

It is found in the photoreceptor inner segment. The protein localises to the cytoplasm. It localises to the cytosol. Its subcellular location is the mitochondrion. The catalysed reaction is GMP + ATP = GDP + ADP. Catalyzes the phosphorylation of GMP to GDP. Essential enzyme for recycling GMP and indirectly, cyclic GMP (cGMP). Involved in the cGMP metabolism in photoreceptors. The chain is Guanylate kinase from Mus musculus (Mouse).